Reading from the N-terminus, the 66-residue chain is MAIVPKRKTSKQRKHKRRTNDALPVQNLISCKNCSNMIQQHRVCEHCGFYKGKKVEGYKSLNLRAQ.

The segment covering 1–18 (MAIVPKRKTSKQRKHKRR) has biased composition (basic residues). The disordered stretch occupies residues 1–21 (MAIVPKRKTSKQRKHKRRTND).

This sequence belongs to the bacterial ribosomal protein bL32 family.

This chain is Large ribosomal subunit protein bL32, found in Mycoplasmopsis agalactiae (strain NCTC 10123 / CIP 59.7 / PG2) (Mycoplasma agalactiae).